We begin with the raw amino-acid sequence, 337 residues long: QPSPVPVGATVMVWIYGGGFMSGTASLDVYDGRYIAATQGVIVASMNYRTGAMGFLSLGNSEAPGNAGLMDQNLALTWIKENVASFGGDQSKVSIFGESAGAASVSYHLLSPMSKNLFQRAIMESASALSPWALLPDAEAHRRGVELAKAVGCSTDSDIEETIECMRGVPALTISENEWVVWGLCQFPFAPVVDGNFIREHPTVSLQTGNLKQTDVMVGFNNDEGVYFLLYGAPGFSKDTQSLITRDQYLEGIKMSVMGINDISVDALSFQYIDWVNFDQPSMYRDAIDNLSGDYNFICPALSFGKAMASFMGRKTYQYKFVHQASNFPWPKWTGVM.

The active-site Acyl-ester intermediate is the Ser99. Cys153 and Cys165 are joined by a disulfide. The active-site Charge relay system is Glu224. Residue Asn290 is glycosylated (N-linked (GlcNAc...) asparagine).

It belongs to the type-B carboxylesterase/lipase family.

It catalyses the reaction an acylcholine + H2O = a carboxylate + choline + H(+). The sequence is that of Cholinesterase 2 (CHE2) from Branchiostoma lanceolatum (Common lancelet).